Here is a 360-residue protein sequence, read N- to C-terminus: Peptide chain release factor 1 (360 aa).

Q235 is subject to N5-methylglutamine. The segment at 284-313 (AKRQQAEASTRRNLLGSGDRSDRNRTYNFP) is disordered.

The protein belongs to the prokaryotic/mitochondrial release factor family. Post-translationally, methylated by PrmC. Methylation increases the termination efficiency of RF1.

It localises to the cytoplasm. In terms of biological role, peptide chain release factor 1 directs the termination of translation in response to the peptide chain termination codons UAG and UAA. The chain is Peptide chain release factor 1 from Escherichia coli O127:H6 (strain E2348/69 / EPEC).